The chain runs to 509 residues: Ribonuclease Y (509 aa).

A helical transmembrane segment spans residues 3–23 (WILYVILPAVCIILGWTIRWL). Residues 199 to 284 (TVSTVSLPSD…EIVQKVTREI (86 aa)) enclose the KH domain. One can recognise an HD domain in the interval 325–418 (VLQHSKEVAI…VQIADAISAA (94 aa)).

This sequence belongs to the RNase Y family.

The protein resides in the cell membrane. In terms of biological role, endoribonuclease that initiates mRNA decay. This chain is Ribonuclease Y, found in Treponema denticola (strain ATCC 35405 / DSM 14222 / CIP 103919 / JCM 8153 / KCTC 15104).